The sequence spans 981 residues: MVIYPWLKNTTELTIALPKKPIIHANMDVLGSPRGGTPTGEHEINAQDGSPINFSPSPDFCWLCDELFIKLEEVALKKKDLGKPRKVRNLEITSNFVSLWRKTVGNDIYPALVLSLPYNDRRSYRVKDVTLVKALCKHMKLPRNSETERRLLHWKQNAPRGVKLSTFCVEELQKRRREPVVPKRMSIDEVNGMLDKLEHESNVGKWSYISLAESPAFNYCLEHMSYVELRFFFDIVLKVPIVSGLESLLLSCWHPDAESYFKVVSDLRIVAHTLYDPNERLEKNDLSVRIGYAFAPHMAQRVKIPYEKVSTKLGNDFYVEEKMDGDRIQVHYMDYGNSIAYFSRNGINYTYLYGENSSKGSISNHLKFVEGVKECILDGEMVSYDKEMQCILPFGLTKSGASHQVNFETTGHTEPTYRPLYAVFDLLYLNGQLLTNQDVVKRKEYLEKILIPSKNVVHLLSGPRCSDAEAITAALGAAVAHGSEGIVLKKARSKYSVGKRDDSWIKIKPEYLENFGENMDLVVIGRDKGRKDSFICALAVTDDSEKNNPSSYESGSDSDSDSEPIIVQPKIEKFISFCSIANGISNEEFKEIDRLTRGNWFPYDERKPPTDWVEFGTKTPREWIDPKNSVVLEVKARSIDNEESKSDLYKTGSTLYNAYCKRIRHDKNWSTASTVAEYDTAREARSYFNVSQNAKFGKDRSSPRKRRTFHLVGDIDVTKPSKADFLKGYYFYVTSGYFDLQSKKNIDASEIGEAVVSCGGTYIHNLRIRASLDKLYILGCKDTRELKMLIERGYDIIHPEWLMDCVKYGTMLQIEPKYVYSASEELMKQARNQEDKYGESYQLPVTEDTLKALANKQVEEGYASEMGTDAVSEYERLLIFKGWLFYILDDYAYHSSWSDIVKWNIESCGGEVTNDLELATIVVAVKDCFSQLSLQAVRNNIGARITGSNDVQPIPKIVTSEWVEACMEAQYLVDEDEYAAI.

The ATP site is built by glutamate 320, lysine 322, arginine 327, glutamate 380, phenylalanine 424, glutamate 484, lysine 489, lysine 506, and lysine 508. Catalysis depends on lysine 322, which acts as the N6-AMP-lysine intermediate. Glutamate 380 lines the Mg(2+) pocket. Glutamate 484 lines the Mg(2+) pocket. The interval 544 to 563 is disordered; that stretch reads SEKNNPSSYESGSDSDSDSE. BRCT domains follow at residues 721 to 819 and 875 to 980; these read SKAD…PKYV and ERLL…EYAA.

It belongs to the ATP-dependent DNA ligase family. Requires Mg(2+) as cofactor.

Its subcellular location is the nucleus. The enzyme catalyses ATP + (deoxyribonucleotide)n-3'-hydroxyl + 5'-phospho-(deoxyribonucleotide)m = (deoxyribonucleotide)n+m + AMP + diphosphate.. Functionally, DNA ligase involved in DNA non-homologous end joining (NHEJ); required for double-strand break (DSB) repair. The chain is DNA ligase 4 (LIG4) from Eremothecium gossypii (strain ATCC 10895 / CBS 109.51 / FGSC 9923 / NRRL Y-1056) (Yeast).